A 113-amino-acid chain; its full sequence is Prefoldin subunit beta (113 aa).

The protein belongs to the prefoldin subunit beta family. As to quaternary structure, heterohexamer of two alpha and four beta subunits.

Its subcellular location is the cytoplasm. Molecular chaperone capable of stabilizing a range of proteins. Seems to fulfill an ATP-independent, HSP70-like function in archaeal de novo protein folding. This chain is Prefoldin subunit beta (pfdB), found in Methanocaldococcus jannaschii (strain ATCC 43067 / DSM 2661 / JAL-1 / JCM 10045 / NBRC 100440) (Methanococcus jannaschii).